The chain runs to 1175 residues: uncharacterized protein (1175 aa).

Gly-586–Thr-593 is an ATP binding site.

This is an uncharacterized protein from Methanocaldococcus jannaschii (strain ATCC 43067 / DSM 2661 / JAL-1 / JCM 10045 / NBRC 100440) (Methanococcus jannaschii).